The following is a 424-amino-acid chain: MRNEIQNETAQTDQTQGSMFSFFNLFPFLLPMFEVIKMVVASVASVVYLGFAGVTLSGSAVALAVSTPLFIIFSPILLPAIAATTVLAAGLGSKKVAAAPAASPSLSLLGIPESIKPSNVIPESIKPSNIIPESIKPSNIIPVSIKPSNIKDKIKDTIGKVKNKIKAKQEEKSKGKSEDSSKGKGKSKGEDTTTDEDKHGKGESKHGKGESKHGKGESTHGKGGKHGSEGSSMDEGKHGGKHGSGGSPMGGGKHGSGGKHESGGSPMGGGKHGSGGKHESGGASMGGGKHESVGKHGSGGKHESGGSPMGGGKHGSGGKHESGGASMGGGKHGSGGRHEGGGSAMGGGKHGSGGKHGSEGKHGGEGSSMGKNSLSKNKKEFHYRGQAMDASSTSESSDGSSSDGSSSDGSSSDGSSHGSGGKHI.

The segment at 1–37 (MRNEIQNETAQTDQTQGSMFSFFNLFPFLLPMFEVIK) is polar. The next 3 helical transmembrane spans lie at 16 to 36 (QGSMFSFFNLFPFLLPMFEVI), 38 to 58 (MVVASVASVVYLGFAGVTLSG), and 69 to 89 (LFIIFSPILLPAIAATTVLAA). The segment at 38–119 (MVVASVASVV…GIPESIKPSN (82 aa)) is hydrophobic. 18 repeat units span residues 111-120 (IPESIKPSNV), 121-130 (IPESIKPSNI), 131-140 (IPESIKPSNI), 141-150 (IPVSIKPSNI), 196-202 (EDKHGKG), 203-209 (ESKHGKG), 210-216 (ESKHGKG), 217-223 (ESTHGKG), 241-258 (KHGSGGSPMGGGKHGSGG), 259-276 (KHESGGSPMGGGKHGSGG), 277-294 (KHESGGASMGGGKHESVG), 301-318 (KHESGGSPMGGGKHGSGG), 319-336 (KHESGGASMGGGKHGSGG), 337-354 (RHEGGGSAMGGGKHGSGG), 396-400 (SSDGS), 401-405 (SSDGS), 406-410 (SSDGS), and 411-415 (SSDGS). A 4 X 10 AA tandem repeats of I-P-[EV]-S-I-K-P-S-N-[IV] region spans residues 111–150 (IPESIKPSNVIPESIKPSNIIPESIKPSNIIPVSIKPSNI). A disordered region spans residues 164–424 (KIKAKQEEKS…SSHGSGGKHI (261 aa)). A compositionally biased stretch (basic and acidic residues) spans 167–220 (AKQEEKSKGKSEDSSKGKGKSKGEDTTTDEDKHGKGESKHGKGESKHGKGESTH). Residues 196 to 223 (EDKHGKGESKHGKGESKHGKGESTHGKG) are 4 X 7 AA tandem repeats of E-[SD]-[KT]-H-G-K-G. The tract at residues 241-354 (KHGSGGSPMG…MGGGKHGSGG (114 aa)) is 6 X 18 AA tandem repeats of [KR]-H-[EG]-[SG]-G-G-[SA]-[PSA]-M-G-G-G-K-H-[GE]-S-[GV]-G. Gly residues predominate over residues 242–255 (HGSGGSPMGGGKHG). The span at 288–304 (GKHESVGKHGSGGKHES) shows a compositional bias: basic and acidic residues. Over residues 341–355 (GGSAMGGGKHGSGGK) the composition is skewed to gly residues. Low complexity predominate over residues 391–416 (SSTSESSDGSSSDGSSSDGSSSDGSS). Residues 396–415 (SSDGSSSDGSSSDGSSSDGS) are 4 X 5 AA tandem repeats of S-S-D-G-S.

This sequence belongs to the oleosin family. The full-length protein is found in the tapetal lipid bodies of immature anthers, the proteolytically cleaved C-terminal product is found on the coats of pollen grains. No expression is detected in other flower organs, siliques or seedlings.

The protein resides in the lipid droplet. It localises to the membrane. Its function is as follows. Many of the major pollen coat proteins are derived from endoproteolytic cleavage of oleosin-like proteins. The polypeptide is Oleosin-B3 (Brassica napus (Rape)).